The primary structure comprises 379 residues: Chaperone protein DnaJ (379 aa).

In terms of domain architecture, J spans 5–69 (DYYEVLGISK…NKRASYDQFG (65 aa)). Residues 136–218 (GTTKEISIRK…CHGKGTENKT (83 aa)) form a CR-type zinc finger. Zn(2+) contacts are provided by C149, C152, C166, C169, C192, C195, C206, and C209. 4 CXXCXGXG motif repeats span residues 149–156 (CETCHGDG), 166–173 (CSYCNGAG), 192–199 (CPKCNGSG), and 206–213 (CPTCHGKG).

It belongs to the DnaJ family. Homodimer. Requires Zn(2+) as cofactor.

Its subcellular location is the cytoplasm. Participates actively in the response to hyperosmotic and heat shock by preventing the aggregation of stress-denatured proteins and by disaggregating proteins, also in an autonomous, DnaK-independent fashion. Unfolded proteins bind initially to DnaJ; upon interaction with the DnaJ-bound protein, DnaK hydrolyzes its bound ATP, resulting in the formation of a stable complex. GrpE releases ADP from DnaK; ATP binding to DnaK triggers the release of the substrate protein, thus completing the reaction cycle. Several rounds of ATP-dependent interactions between DnaJ, DnaK and GrpE are required for fully efficient folding. Also involved, together with DnaK and GrpE, in the DNA replication of plasmids through activation of initiation proteins. In Staphylococcus aureus (strain bovine RF122 / ET3-1), this protein is Chaperone protein DnaJ.